An 865-amino-acid polypeptide reads, in one-letter code: DNA topoisomerase 1 (865 aa).

The Toprim domain occupies 3 to 142 (KALVIVESPA…RYSRVVFNEI (140 aa)). E9 serves as a coordination point for Mg(2+). The tract at residues 37–65 (LPTSGSAAKKSADSTSTKTAKKPKKDERG) is disordered. Low complexity predominate over residues 39-54 (TSGSAAKKSADSTSTK). D111 contacts Mg(2+). Positions 158-575 (NINRVNAQQA…NFFSDFTQQL (418 aa)) constitute a Topo IA-type catalytic domain. An interaction with DNA region spans residues 192-197 (SAGRVQ). Residue Y319 is the O-(5'-phospho-DNA)-tyrosine intermediate of the active site. 3 consecutive C4-type zinc fingers follow at residues 599 to 630 (CPTCGRKMGIRTASTGVFLGCSGYALSPKERC), 662 to 689 (CQKCGTAMDSYLIDPKRKLHVCGNNPTC), and 711 to 736 (CEKCGSEMHLKMGRFGKYMACTNDEC).

Belongs to the type IA topoisomerase family. In terms of assembly, monomer. Mg(2+) is required as a cofactor.

It catalyses the reaction ATP-independent breakage of single-stranded DNA, followed by passage and rejoining.. Releases the supercoiling and torsional tension of DNA, which is introduced during the DNA replication and transcription, by transiently cleaving and rejoining one strand of the DNA duplex. Introduces a single-strand break via transesterification at a target site in duplex DNA. The scissile phosphodiester is attacked by the catalytic tyrosine of the enzyme, resulting in the formation of a DNA-(5'-phosphotyrosyl)-enzyme intermediate and the expulsion of a 3'-OH DNA strand. The free DNA strand then undergoes passage around the unbroken strand, thus removing DNA supercoils. Finally, in the religation step, the DNA 3'-OH attacks the covalent intermediate to expel the active-site tyrosine and restore the DNA phosphodiester backbone. This chain is DNA topoisomerase 1, found in Salmonella typhimurium (strain LT2 / SGSC1412 / ATCC 700720).